The following is a 112-amino-acid chain: Peptidyl-tRNA hydrolase (112 aa).

Belongs to the PTH2 family.

It localises to the cytoplasm. It carries out the reaction an N-acyl-L-alpha-aminoacyl-tRNA + H2O = an N-acyl-L-amino acid + a tRNA + H(+). The natural substrate for this enzyme may be peptidyl-tRNAs which drop off the ribosome during protein synthesis. The chain is Peptidyl-tRNA hydrolase from Methanothermobacter thermautotrophicus (strain ATCC 29096 / DSM 1053 / JCM 10044 / NBRC 100330 / Delta H) (Methanobacterium thermoautotrophicum).